The following is a 321-amino-acid chain: tRNA dimethylallyltransferase (321 aa).

Residue 25 to 32 (GPTASGKS) coordinates ATP. 27 to 32 (TASGKS) is a substrate binding site. The interaction with substrate tRNA stretch occupies residues 50-53 (DSMQ).

Belongs to the IPP transferase family. Monomer. The cofactor is Mg(2+).

The catalysed reaction is adenosine(37) in tRNA + dimethylallyl diphosphate = N(6)-dimethylallyladenosine(37) in tRNA + diphosphate. In terms of biological role, catalyzes the transfer of a dimethylallyl group onto the adenine at position 37 in tRNAs that read codons beginning with uridine, leading to the formation of N6-(dimethylallyl)adenosine (i(6)A). The chain is tRNA dimethylallyltransferase from Rhodopseudomonas palustris (strain ATCC BAA-98 / CGA009).